The following is a 530-amino-acid chain: Probable glycerol-3-phosphate acyltransferase 2 (530 aa).

Helical transmembrane passes span 70–90, 93–113, and 275–295; these read YFMVVAFEAGGVIRSLFLLVL, FISLMSYEMGLKTMVMLSFFG, and LVLFMWAPFAAVLAAARLVFG. The HXXXXD motif signature appears at 339 to 344; sequence HRTLLD.

The protein belongs to the GPAT/DAPAT family. Weakly or not expressed in roots, leaves, seedlings, developing siliques and flower buds.

It is found in the membrane. The catalysed reaction is sn-glycerol 3-phosphate + an acyl-CoA = a 1-acyl-sn-glycero-3-phosphate + CoA. The protein operates within phospholipid metabolism; CDP-diacylglycerol biosynthesis; CDP-diacylglycerol from sn-glycerol 3-phosphate: step 1/3. Esterifies acyl-group from acyl-ACP to the sn-1 position of glycerol-3-phosphate, an essential step in glycerolipid biosynthesis. This Arabidopsis thaliana (Mouse-ear cress) protein is Probable glycerol-3-phosphate acyltransferase 2 (GPAT2).